The sequence spans 312 residues: Glycerol-3-phosphate phosphatase (312 aa).

Aspartate 30 acts as the Nucleophile in catalysis. Residues aspartate 30, aspartate 32, and aspartate 251 each coordinate Mg(2+). Aspartate 32 acts as the Proton donor in catalysis.

This sequence belongs to the HAD-like hydrolase superfamily. CbbY/CbbZ/Gph/YieH family. In terms of assembly, homodimer. It depends on Mg(2+) as a cofactor.

It catalyses the reaction O-phospho-L-tyrosyl-[protein] + H2O = L-tyrosyl-[protein] + phosphate. The enzyme catalyses sn-glycerol 1-phosphate + H2O = glycerol + phosphate. It carries out the reaction sn-glycerol 3-phosphate + H2O = glycerol + phosphate. Glycerol-3-phosphate phosphatase hydrolyzing glycerol-3-phosphate into glycerol. Thereby, regulates the cellular levels of glycerol-3-phosphate a metabolic intermediate of glucose, lipid and energy metabolism. Was also shown to have a 2-phosphoglycolate phosphatase activity and a tyrosine-protein phosphatase activity. However, their physiological relevance is unclear. In vitro, also has a phosphatase activity toward ADP, ATP, GDP and GTP. This Gallus gallus (Chicken) protein is Glycerol-3-phosphate phosphatase.